We begin with the raw amino-acid sequence, 502 residues long: 2-isopropylmalate synthase (502 aa).

Mn(2+) is bound by residues aspartate 1, histidine 189, histidine 191, and asparagine 225. Residues 1 to 254 (DGEQALQASL…STNINHKEIY (254 aa)) form the Pyruvate carboxyltransferase domain. A regulatory domain region spans residues 379–502 (CLKFFSVQSI…VNKNLKNLKK (124 aa)).

The protein belongs to the alpha-IPM synthase/homocitrate synthase family. LeuA type 1 subfamily. As to quaternary structure, homodimer. The cofactor is Mn(2+).

The protein resides in the cytoplasm. It catalyses the reaction 3-methyl-2-oxobutanoate + acetyl-CoA + H2O = (2S)-2-isopropylmalate + CoA + H(+). It functions in the pathway amino-acid biosynthesis; L-leucine biosynthesis; L-leucine from 3-methyl-2-oxobutanoate: step 1/4. Functionally, catalyzes the condensation of the acetyl group of acetyl-CoA with 3-methyl-2-oxobutanoate (2-ketoisovalerate) to form 3-carboxy-3-hydroxy-4-methylpentanoate (2-isopropylmalate). This Buchnera aphidicola subsp. Uroleucon sonchi protein is 2-isopropylmalate synthase.